The chain runs to 143 residues: Transcriptional regulator MraZ (143 aa).

SpoVT-AbrB domains lie at 5-47 (EFRH…PMNE) and 76-119 (ASEC…SQEK).

It belongs to the MraZ family. In terms of assembly, forms oligomers.

The protein localises to the cytoplasm. It localises to the nucleoid. The protein is Transcriptional regulator MraZ of Natranaerobius thermophilus (strain ATCC BAA-1301 / DSM 18059 / JW/NM-WN-LF).